The following is a 112-amino-acid chain: Cytochrome c2 (112 aa).

Residues Cys-14, Cys-17, His-18, and Met-91 each contribute to the heme c site.

It belongs to the cytochrome c family. In terms of processing, binds 1 heme c group covalently per subunit.

Functionally, cytochrome c2 is found mainly in purple, non-sulfur, photosynthetic bacteria where it functions as the electron donor to the oxidized bacteriochlorophyll in the photophosphorylation pathway. However, it may also have a role in the respiratory chain and is found in some non-photosynthetic bacteria. The protein is Cytochrome c2 (cycA) of Rhodospirillum rubrum.